The primary structure comprises 246 residues: Probable transcriptional regulatory protein CKO_01097 (246 aa).

The segment at 1-20 is disordered; that stretch reads MAGHSKWANTRHRKAAQDAK.

The protein belongs to the TACO1 family.

It is found in the cytoplasm. This Citrobacter koseri (strain ATCC BAA-895 / CDC 4225-83 / SGSC4696) protein is Probable transcriptional regulatory protein CKO_01097.